The sequence spans 216 residues: MGQKVNPEGLRLGIVKTWQSRWYADKEYADFILEDFKLREFVKKKLHHAGIAKVEIERSLNRIRLRIFAARPGIVIGKKGNEIEQLKNEIRQKVVAGKDLAIDIQEVKKPETVAQLVAENVAGQLERRVAFRRAMKRGVSSAMRFGVKGIKIICSGRLGGAEMARREWYREGRVPLHTLRADVDYGFVEASTTYGRIGVKVFIFKGEVLKDERKKN.

Residues leucine 38–lysine 108 form the KH type-2 domain.

It belongs to the universal ribosomal protein uS3 family. In terms of assembly, part of the 30S ribosomal subunit. Forms a tight complex with proteins S10 and S14.

Its function is as follows. Binds the lower part of the 30S subunit head. Binds mRNA in the 70S ribosome, positioning it for translation. This chain is Small ribosomal subunit protein uS3, found in Desulfosudis oleivorans (strain DSM 6200 / JCM 39069 / Hxd3) (Desulfococcus oleovorans).